Consider the following 586-residue polypeptide: MLIRLKKRKILQVIVSAVVLILFFCSVHNDVSSSWLYGKKLRLPVLTRSNLKNNFYTTLVQAIVENKPADSSPDLSKLHGAEGCSFANNVAAHDSGHDSDLSYESLSKCYNLNKTVQESLREVHSKFTDTLSGKLNFSIPQREALFSGSEGIVTIGGGKYSVLAYTMIKKLRDTGTTLPIEVIIPPQDEGEDDFCKNWLPKFNGKCIYFSDIVPSKPLSDLKLTHFQLKVFGLIISSFKRIIFLDADNYAVKNLDLAFNTTSFNDTGLILWPDFWRRVTPPAFYNIIGSSINIGKRVRFVSDDISPVSRYDPFVSNSNDYTPKERQEHFLKHVPLHDLDGTMPDLSSESGQMVIDKIRHFNTLLLALYYNVYGPTWYYKMISQGTAGEGDKDTFVAAAHALNMPYYQVRTNFEFDGFFYQKDDYKGLALLQHDFEQDYKQYQKAQQKVKANIEEFSKLDPDYTLDNGFLKTLMVNDDGSDLDIMFIHASFYKADPWTLYHENRFIGPNGEQVRGFRKPHRYGMDFELFLFNDMRGSFCTTPKSQVIKFKYFTDKVNTPEWDAMCEYLTNHVNYLESTHKEAMGEKN.

A signal peptide spans Met-1–Asn-29. Asn-113, Asn-136, Asn-259, and Asn-264 each carry an N-linked (GlcNAc...) asparagine glycan.

This sequence belongs to the MNN1/MNT family. Interacts with SVP26. In terms of processing, glycosylated.

The protein resides in the golgi apparatus. It is found in the cis-Golgi network. It participates in protein modification; protein glycosylation. In terms of biological role, responsible for addition of first and second mannose residues to the outer chain of core N-linked polysaccharides and to O-linked mannotriose. Implicated in late Golgi modifications. The sequence is that of Alpha-1,2-mannosyltransferase MNN5 (MNN5) from Saccharomyces cerevisiae (strain ATCC 204508 / S288c) (Baker's yeast).